Reading from the N-terminus, the 215-residue chain is uncharacterized protein (215 aa).

Residues Ser-114, Asp-162, and His-194 each act as charge relay system in the active site.

The protein belongs to the AB hydrolase superfamily. AB hydrolase 2 family.

This is an uncharacterized protein from Rickettsia typhi (strain ATCC VR-144 / Wilmington).